The primary structure comprises 692 residues: Proprotein convertase subtilisin/kexin type 9 (692 aa).

The signal sequence occupies residues 1-30 (MGTVSSRRSWWPLPLPLLLLLLLGPAGARA). The propeptide occupies 31–152 (QEDEDGDYEE…IEEDSSVFAQ (122 aa)). Position 38 is a sulfotyrosine (Tyr38). Ser47 is modified (phosphoserine). The region spanning 77–149 (TYVVVLKEET…VDYIEEDSSV (73 aa)) is the Inhibitor I9 domain. The region spanning 155-444 (PWNLERITPA…VLTPNLVAAL (290 aa)) is the Peptidase S8 domain. Active-site charge relay system residues include Asp186 and His226. 2 cysteine pairs are disulfide-bonded: Cys223–Cys255 and Cys323–Cys358. Ser386 serves as the catalytic Charge relay system. A C-terminal domain region spans residues 450–692 (RAGWQLFCRT…HLVQASQELQ (243 aa)). 3 disulfides stabilise this stretch: Cys457–Cys527, Cys477–Cys526, and Cys486–Cys509. An N-linked (GlcNAc...) asparagine glycan is attached at Asn533. Cystine bridges form between Cys534–Cys601, Cys552–Cys600, Cys562–Cys588, Cys608–Cys679, Cys626–Cys678, and Cys635–Cys654. Ser688 carries the phosphoserine modification.

It belongs to the peptidase S8 family. In terms of assembly, monomer. Can self-associate to form dimers and higher multimers which may have increased LDLR degrading activity. The precursor protein but not the mature protein may form multimers. Interacts with APOB, VLDLR, LRP8/APOER2 and BACE1. The full-length immature form (pro-PCSK9) interacts with SCNN1A, SCNN1B and SCNN1G. The pro-PCSK9 form (via C-terminal domain) interacts with LDLR. Interacts (via the C-terminal domain) with ANXA2 (via repeat Annexin 1); the interaction inhibits the degradation of LDLR. Requires Ca(2+) as cofactor. Cleavage by furin and PCSK5 generates a truncated inactive protein that is unable to induce LDLR degradation. In terms of processing, undergoes autocatalytic cleavage in the endoplasmic reticulum to release the propeptide from the N-terminus and the cleavage of the propeptide is strictly required for its maturation and activation. The cleaved propeptide however remains associated with the catalytic domain through non-covalent interactions, preventing potential substrates from accessing its active site. As a result, it is secreted from cells as a propeptide-containing, enzymatically inactive protein. Post-translationally, phosphorylation protects the propeptide against proteolysis.

It localises to the cytoplasm. The protein resides in the secreted. The protein localises to the endosome. Its subcellular location is the lysosome. It is found in the cell surface. It localises to the endoplasmic reticulum. The protein resides in the golgi apparatus. With respect to regulation, its proteolytic activity is autoinhibited by the non-covalent binding of the propeptide to the catalytic domain. Inhibited by EGTA. In terms of biological role, crucial player in the regulation of plasma cholesterol homeostasis. Binds to low-density lipid receptor family members: low density lipoprotein receptor (LDLR), very low density lipoprotein receptor (VLDLR), apolipoprotein E receptor (LRP1/APOER) and apolipoprotein receptor 2 (LRP8/APOER2), and promotes their degradation in intracellular acidic compartments. Acts via a non-proteolytic mechanism to enhance the degradation of the hepatic LDLR through a clathrin LDLRAP1/ARH-mediated pathway. May prevent the recycling of LDLR from endosomes to the cell surface or direct it to lysosomes for degradation. Can induce ubiquitination of LDLR leading to its subsequent degradation. Inhibits intracellular degradation of APOB via the autophagosome/lysosome pathway in a LDLR-independent manner. Involved in the disposal of non-acetylated intermediates of BACE1 in the early secretory pathway. Inhibits epithelial Na(+) channel (ENaC)-mediated Na(+) absorption by reducing ENaC surface expression primarily by increasing its proteasomal degradation. Regulates neuronal apoptosis via modulation of LRP8/APOER2 levels and related anti-apoptotic signaling pathways. This is Proprotein convertase subtilisin/kexin type 9 (PCSK9) from Macaca mulatta (Rhesus macaque).